Reading from the N-terminus, the 620-residue chain is tRNA uridine 5-carboxymethylaminomethyl modification enzyme MnmG (620 aa).

FAD contacts are provided by residues 13–18, Val125, and Ser182; that span reads GGGHAG. 280–294 is a binding site for NAD(+); that stretch reads GPRYCPSVEDKIVKF. Asn377 is an FAD binding site.

Belongs to the MnmG family. In terms of assembly, homodimer. Heterotetramer of two MnmE and two MnmG subunits. Requires FAD as cofactor.

The protein resides in the cytoplasm. In terms of biological role, NAD-binding protein involved in the addition of a carboxymethylaminomethyl (cmnm) group at the wobble position (U34) of certain tRNAs, forming tRNA-cmnm(5)s(2)U34. In Sulfurihydrogenibium sp. (strain YO3AOP1), this protein is tRNA uridine 5-carboxymethylaminomethyl modification enzyme MnmG.